A 384-amino-acid chain; its full sequence is Terpene cyclase ascI (384 aa).

A signal peptide spans 1 to 25 (MPQLAGKLILAGLIPLGAWVLHGFA). A helical membrane pass occupies residues 82-102 (LSLHAFMFAGQGVPLLVLNML). An N-linked (GlcNAc...) asparagine glycan is attached at asparagine 109. The next 4 helical transmembrane spans lie at 119–139 (VFGI…YLFL), 164–184 (AVGF…SLPH), 194–214 (VLSV…AYFA), and 235–255 (GAVY…TFAI). Residue asparagine 258 is glycosylated (N-linked (GlcNAc...) asparagine). The next 2 helical transmembrane spans lie at 291–311 (WFLQ…AIGI) and 330–350 (IALR…ALSL). Asparagine 372 carries an N-linked (GlcNAc...) asparagine glycan.

The protein belongs to the membrane-bound ascI terpene cyclase family.

The protein resides in the membrane. It carries out the reaction 16-hydroxy-ilicicolin A epoxide = ascofuranol. The protein operates within secondary metabolite biosynthesis; terpenoid biosynthesis. Its function is as follows. Epoxide hydrolase; part of the asc-2 gene cluster that mediates the biosynthesis of ascofuranone, a strong inhibitor of cyanide-insensitive alternative oxidases and a promising drug candidate against African trypanosomiasis. The first step in the pathway is performed by the non-reducing polyketide synthase ascC that produces orsellinic acid by condensing acetyl-CoA with 3 malonyl-CoA units. Orsellinic acid is then prenylated by the prenyltransferase ascA to yield ilicicolinic acid B. Ilicicolinic acid B is further reduced to ilicicolin B by the reductase ascB. The halogenase ascD then chlorinates ilicicolin B to produce ilicicolin A which is converted to ilicicolin A epoxide by the cytochrome P450 monooxygenase ascE that catalyzes stereoselective epoxidation of the terminal double bond of the prenyl group. Ilicicolin A epoxide is the last common precursor for the biosynthesis of ascofuranone and ascochlorin. The terpene cyclase ascF produces a monocyclic terpene, and the cyclization reaction is proposed to be initiated by protonation of the terminal epoxide of ilicicolin A epoxide to generate a monocyclic tertiarycation, which is followed by a series of hydride and methyl shifts with abstraction of proton, leading to the formation of the (14S,15R,19R)-trimethylcyclohexanone ring structure of ilicicolin C, which is finally reduced to ascochlorin by the dehydrogenase ascG. On the other hand, ilicicolin A epoxide is hydroxylated by the cytochrome P450 monooxygenase ascH, and the resultant product is cyclized by the terpene cyclase ascI to ascofuranol via protonation-initiated epoxide ring opening, which facilitates the 6-endo-tet cyclization to form the tetrahy-drofuran ring. Finally, ascofuranol is oxidized into ascofuranone by ascJ. The polypeptide is Terpene cyclase ascI (Acremonium egyptiacum (Oospora egyptiaca)).